The chain runs to 128 residues: Deoxycytidylate deaminase (128 aa).

Positions 5–128 (DWDEYFLGIA…IERVVYPKES (124 aa)) constitute a CMP/dCMP-type deaminase domain. A Zn(2+)-binding site is contributed by H81. E83 (proton donor) is an active-site residue. Residues C107 and C110 each contribute to the Zn(2+) site.

This sequence belongs to the cytidine and deoxycytidylate deaminase family.

The enzyme catalyses dCMP + H2O + H(+) = dUMP + NH4(+). The chain is Deoxycytidylate deaminase (36.1) from Mycobacterium (Mycobacteriophage D29).